We begin with the raw amino-acid sequence, 545 residues long: E3 ubiquitin-protein ligase ipaH9.8 (545 aa).

The tract at residues 1 to 242 (MLPINNNFSL…YHGPRIYFSM (242 aa)) is interaction with target proteins. 8 LRR repeats span residues 57 to 77 (NSDE…NLPA), 78 to 99 (QITL…PVTL), 100 to 117 (KKLY…VLPP), 118 to 139 (ALES…PDSL), 140 to 157 (LTMN…SLPQ), 158 to 179 (ALKN…SEGN), 182 to 203 (VVRE…ILNL), and 205 to 228 (NECS…QRLT). Residues 243-250 (SDGQQNTL) are linker. An E3 ubiquitin-protein ligase catalytic domain region spans residues 251-545 (HRPLADAVTA…SENGSQLHHS (295 aa)). The 293-residue stretch at 253–545 (PLADAVTAWF…SENGSQLHHS (293 aa)) folds into the NEL domain. The active-site Glycyl thioester intermediate is C337.

Belongs to the LRR-containing bacterial E3 ligase family. In terms of assembly, also interacts with human and mouse U2AF1 (U2AF35). In terms of processing, ubiquitinated in the presence of host E1 ubiquitin-activating enzyme, E2 ubiquitin-conjugating enzyme and ubiquitin.

The protein resides in the secreted. Its subcellular location is the host cytoplasm. It is found in the host nucleus. It catalyses the reaction S-ubiquitinyl-[E2 ubiquitin-conjugating enzyme]-L-cysteine + [acceptor protein]-L-lysine = [E2 ubiquitin-conjugating enzyme]-L-cysteine + N(6)-ubiquitinyl-[acceptor protein]-L-lysine.. Its activity is regulated as follows. Exists in an autoinhibited state in the absence of substrate protein, due to interactions of the leucine-rich repeats with NEL domain. Is activated upon binding to a substrate protein. In terms of biological role, effector E3 ubiquitin ligase that interferes with host's ubiquitination pathway and modulates the acute inflammatory responses, thus facilitating bacterial colonization within the host cell. Interacts with IKBKG (NEMO) and TNIP1 (ABIN-1), a ubiquitin-binding adapter protein, which results in TNIP1-dependent 'Lys-27'-linked polyubiquitination of IKBKG. Consequently, polyubiquitinated IKBKG undergoes proteasome-dependent degradation, which perturbs NF-kappa-B activation during bacterial infection. Mediates polyubiquitination of host U2AF1, leading to its proteasomal degradation. Catalyzes 'Lys-48'-linked polyubiquitination and subsequent degradation of a subset of host guanylate-binding proteins (GBP1, GBP2, GBP4 and GBP6), thereby suppressing host cell defense. In contrast, host GBP3 and GBP7 are not ubiquitinated by IpaH9.8. Uses UBE2D2 (UBCH5B) as an E2 ubiquitin-conjugating enzyme. This Shigella dysenteriae serotype 1 (strain Sd197) protein is E3 ubiquitin-protein ligase ipaH9.8 (ipaH9.8).